We begin with the raw amino-acid sequence, 89 residues long: Probable Fe(2+)-trafficking protein (89 aa).

Belongs to the Fe(2+)-trafficking protein family.

Its function is as follows. Could be a mediator in iron transactions between iron acquisition and iron-requiring processes, such as synthesis and/or repair of Fe-S clusters in biosynthetic enzymes. The protein is Probable Fe(2+)-trafficking protein of Acinetobacter baumannii (strain AB0057).